We begin with the raw amino-acid sequence, 478 residues long: Ribosomal RNA small subunit methyltransferase F (478 aa).

S-adenosyl-L-methionine-binding positions include 121 to 127, E145, D172, and D190; that span reads ASAPGSK. The active-site Nucleophile is C243.

It belongs to the class I-like SAM-binding methyltransferase superfamily. RsmB/NOP family.

It is found in the cytoplasm. The catalysed reaction is cytidine(1407) in 16S rRNA + S-adenosyl-L-methionine = 5-methylcytidine(1407) in 16S rRNA + S-adenosyl-L-homocysteine + H(+). Functionally, specifically methylates the cytosine at position 1407 (m5C1407) of 16S rRNA. The sequence is that of Ribosomal RNA small subunit methyltransferase F from Shewanella woodyi (strain ATCC 51908 / MS32).